Here is a 280-residue protein sequence, read N- to C-terminus: Ribonuclease P protein subunit p38 (280 aa).

Alanine 2 carries the N-acetylalanine modification. 3 positions are modified to phosphoserine: serine 12, serine 221, and serine 230. A disordered region spans residues 202-227 (WLPDRTQGPTDSLETEPSESQDNEIL). Acidic residues predominate over residues 214-226 (LETEPSESQDNEI). The segment at 254 to 280 (QPLKIKKLIPNPSKIRKPPKSKKSISK) is disordered. Basic residues predominate over residues 267-280 (KIRKPPKSKKSISK).

It belongs to the eukaryotic ribosomal protein eL8 family. As to quaternary structure, component of nuclear RNase P and RNase MRP ribonucleoproteins. RNase P consists of a catalytic RNA moiety and about 10 protein subunits; POP1, POP4, POP5, POP7, RPP14, RPP21, RPP25, RPP30, RPP38 and RPP40. Within the RNase P complex, POP1, POP7 and RPP25 form the 'finger' subcomplex, POP5, RPP14, RPP40 and homodimeric RPP30 form the 'palm' subcomplex, and RPP21, POP4 and RPP38 form the 'wrist' subcomplex. All subunits of the RNase P complex interact with the catalytic RNA. Several subunits of RNase P are also part of the RNase MRP complex. RNase MRP consists of a catalytic RNA moiety and about 8 protein subunits; POP1, POP7, RPP25, RPP30, RPP38, RPP40 and possibly also POP4 and POP5.

The protein localises to the nucleus. Its subcellular location is the nucleolus. Component of ribonuclease P, a ribonucleoprotein complex that generates mature tRNA molecules by cleaving their 5'-ends. Also a component of the MRP ribonuclease complex, which cleaves pre-rRNA sequences. The chain is Ribonuclease P protein subunit p38 (Rpp38) from Mus musculus (Mouse).